The sequence spans 355 residues: Lamassu protein LmuA (355 aa).

Component of antiviral defense system Lamassu type II, composed of LmuA and LmuB. Expression of Lamassu type II in B.subtilis (strain BEST7003) confers resistance to phage SpBeta. May be a nuclease. This chain is Lamassu protein LmuA, found in Bacillus cereus (strain VD014).